The following is a 409-amino-acid chain: MHFIQPLQAFLQTKHIVEFSSIQQAVFKVWPRQNVVGIAETGSGKTFAYLLPALNQIDVTLNKPQAVVFVPTKELKWQILTILNDIKASFTGLKVSENFNSNAHLIVSLIGKDIILHETIKYVVFDEVDMFLEDSSQAEWINCVQLFQKHKPHFGFFSATLFNEQLQQIRKQVAPLTVVNQKKRAWKHSLVKHFLLNLNGQEPFAGLLALLNYHHNEQVLVFCSNAKSLKQLTSLLAHNQLSFKSLHGQLTPNERKHIFTSAANNTVRVLVVSDLLARGIDLPHFSVVISWDLPLVDSFYIHRSGRVARFNSWGNSYVFDLPHNQHKLTKFAHKGILFNSVHLERDGTLKFPQLKQSKQKPAVSSELKTAIKRIKAGYKKVKPNYKKRQKQQIAELFAKRKQRRSWKNF.

Residues 26 to 179 enclose the Helicase ATP-binding domain; it reads VFKVWPRQNV…RKQVAPLTVV (154 aa). An ATP-binding site is contributed by 39 to 46; sequence AETGSGKT. The DEVD box signature appears at 126–129; it reads DEVD. The Helicase C-terminal domain occupies 190–349; that stretch reads LVKHFLLNLN…SVHLERDGTL (160 aa).

It belongs to the DEAD box helicase family.

The enzyme catalyses ATP + H2O = ADP + phosphate + H(+). This chain is Probable ATP-dependent RNA helicase MG308 homolog, found in Mycoplasma pneumoniae (strain ATCC 29342 / M129 / Subtype 1) (Mycoplasmoides pneumoniae).